The sequence spans 152 residues: Ribosome maturation factor RimP (152 aa).

Belongs to the RimP family.

The protein localises to the cytoplasm. Its function is as follows. Required for maturation of 30S ribosomal subunits. This chain is Ribosome maturation factor RimP, found in Idiomarina loihiensis (strain ATCC BAA-735 / DSM 15497 / L2-TR).